A 159-amino-acid polypeptide reads, in one-letter code: Urease accessory protein UreE (159 aa).

This sequence belongs to the UreE family.

It localises to the cytoplasm. Functionally, involved in urease metallocenter assembly. Binds nickel. Probably functions as a nickel donor during metallocenter assembly. This is Urease accessory protein UreE from Vibrio parahaemolyticus.